The sequence spans 630 residues: Membrane protein insertase YidC (630 aa).

A run of 5 helical transmembrane segments spans residues 10 to 30 (LMFL…VMGP), 396 to 416 (MVGN…LILF), 470 to 490 (VPML…TVTI), 528 to 548 (LIGA…LYGF), and 571 to 591 (FFPI…VIYW).

This sequence belongs to the OXA1/ALB3/YidC family. Type 1 subfamily. As to quaternary structure, interacts with the Sec translocase complex via SecD. Specifically interacts with transmembrane segments of nascent integral membrane proteins during membrane integration.

It localises to the cell inner membrane. In terms of biological role, required for the insertion and/or proper folding and/or complex formation of integral membrane proteins into the membrane. Involved in integration of membrane proteins that insert both dependently and independently of the Sec translocase complex, as well as at least some lipoproteins. Aids folding of multispanning membrane proteins. The chain is Membrane protein insertase YidC from Caulobacter sp. (strain K31).